The sequence spans 493 residues: EGF-containing fibulin-like extracellular matrix protein 1 (493 aa).

Positions 1–17 are cleaved as a signal peptide; it reads MLQTLFLTMLTLALVKS. The 46-residue stretch at 26-71 folds into the EGF-like 1; atypical domain; that stretch reads YTQCTDGYEWDPIRQQCKDIDECDIVPDACKGGMKCVNHYGGYLCL. The EGF-like 2; calcium-binding domain occupies 173-213; the sequence is DIDECTSGTHNCRTDQVCINLRGSFTCQCLPGYQKRGEQCV. Intrachain disulfides connect Cys177/Cys190, Cys184/Cys199, Cys201/Cys212, Cys218/Cys228, Cys224/Cys237, Cys239/Cys252, Cys258/Cys268, Cys264/Cys277, Cys279/Cys292, Cys298/Cys309, Cys305/Cys318, Cys320/Cys332, Cys338/Cys350, Cys344/Cys359, and Cys365/Cys377. The EGF-like 3; calcium-binding domain maps to 214-253; that stretch reads DIDECTVPPYCHQRCVNTPGSFYCQCSPGFQLAANNYTCV. N-linked (GlcNAc...) asparagine glycosylation is present at Asn249. Residues 254–293 enclose the EGF-like 4; calcium-binding domain; that stretch reads DINECDASNQCAQQCYNILGSFICQCNQGYELSSDRLNCE. Residues 259–493 are mediates interaction with TIMP3; the sequence is DASNQCAQQC…LTIIVGPFSF (235 aa). The 40-residue stretch at 294–333 folds into the EGF-like 5; calcium-binding domain; the sequence is DIDECRTSSYLCQYQCVNEPGKFSCMCPQGYEVVRSRTCQ. The 45-residue stretch at 334–378 folds into the EGF-like 6; calcium-binding domain; it reads DINECETTNECREDEMCWNYHGGFRCYPRNPCQDHYVLTSENRCV.

This sequence belongs to the fibulin family. In terms of assembly, interacts with ECM1. Interacts with TIMP3. In terms of tissue distribution, expressed in the eye in the ciliary body, cornea, inner nuclear layer of the retina, and in the optic disk.

It is found in the secreted. The protein localises to the extracellular space. Its subcellular location is the extracellular matrix. Functionally, binds EGFR, the EGF receptor, inducing EGFR autophosphorylation and the activation of downstream signaling pathways. May play a role in cell adhesion and migration. May function as a negative regulator of chondrocyte differentiation. In the olfactory epithelium, it may regulate glial cell migration, differentiation and the ability of glial cells to support neuronal neurite outgrowth. The chain is EGF-containing fibulin-like extracellular matrix protein 1 (Efemp1) from Mus musculus (Mouse).